Reading from the N-terminus, the 127-residue chain is Protein yippee-like 4 (127 aa).

A Yippee domain is found at R27–N124. Zn(2+) contacts are provided by C31, C34, C87, and C90. T92 and T93 each carry phosphothreonine. At Y98 the chain carries Phosphotyrosine.

It belongs to the yippee family. Detected in brain, spleen and testis.

The protein localises to the nucleus. The protein resides in the nucleolus. The chain is Protein yippee-like 4 (Ypel4) from Mus musculus (Mouse).